An 87-amino-acid chain; its full sequence is uncharacterized protein (87 aa).

Residues 67–87 (TGGDPREAVVRPADQVEGYTG) are disordered.

This is an uncharacterized protein from Mycobacterium bovis (strain ATCC BAA-935 / AF2122/97).